We begin with the raw amino-acid sequence, 714 residues long: Cell wall protein IFF7 (714 aa).

The N-terminal stretch at 1–19 is a signal peptide; sequence MLFTLSILSTLLFSTSISA. The N-linked (GlcNAc...) asparagine glycan is linked to asparagine 200. Positions 320–330 are enriched in polar residues; it reads GPVPSQKSLPS. Disordered regions lie at residues 320-633 and 660-692; these read GPVP…AADS and PIAN…ANGS. Over residues 346–504 the composition is skewed to low complexity; the sequence is GSSSSSSVVS…SSTPLSGDSS (159 aa). 5 N-linked (GlcNAc...) asparagine glycosylation sites follow: asparagine 390, asparagine 394, asparagine 399, asparagine 421, and asparagine 473. Residues 505 to 519 show a composition bias toward polar residues; it reads QVSSLTTGTSPDTIA. A compositionally biased stretch (low complexity) spans 520 to 544; sequence SFQTDSTSFGFGSGSPSSGAVQSSG. Positions 545–558 are enriched in polar residues; the sequence is VTNSTPNTGDVNTQ. Low complexity-rich tracts occupy residues 559 to 590 and 597 to 625; these read SNTA…TTTG and NNNN…NTNN. N-linked (GlcNAc...) asparagine glycans are attached at residues asparagine 577, asparagine 621, asparagine 624, and asparagine 663. The span at 665–679 shows a compositional bias: low complexity; the sequence is SSSPSSSSSSSSSSS. N-linked (GlcNAc...) asparagine glycosylation occurs at asparagine 690. Asparagine 690 is lipidated: GPI-anchor amidated asparagine. Positions 691 to 714 are cleaved as a propeptide — removed in mature form; it reads GSSKLSIGMTFMISGFATMFALFM.

Belongs to the HYR1/IFF family. Post-translationally, the GPI-anchor is attached to the protein in the endoplasmic reticulum and serves to target the protein to the cell surface. There, the glucosamine-inositol phospholipid moiety is cleaved off and the GPI-modified mannoprotein is covalently attached via its lipidless GPI glycan remnant to the 1,6-beta-glucan of the outer cell wall layer.

The protein resides in the secreted. Its subcellular location is the cell wall. It localises to the membrane. GPI-anchored cell wall protein involved in cell wall organization, hyphal growth, as well as in host-fungal interaction and virulence. The protein is Cell wall protein IFF7 (IFF8) of Candida albicans (strain SC5314 / ATCC MYA-2876) (Yeast).